The primary structure comprises 460 residues: GTPase Der (460 aa).

2 EngA-type G domains span residues 2 to 164 (QSII…HEEF) and 196 to 368 (IRVG…ENFT). GTP contacts are provided by residues 8–15 (GKPNVGKS), 55–59 (DSGGL), 116–119 (NKVD), 202–209 (GRVNVGKS), 249–253 (DTAGI), and 313–316 (NKWD). The KH-like domain occupies 369 to 453 (QKIQTSKLNT…PLVIASRKKG (85 aa)).

This sequence belongs to the TRAFAC class TrmE-Era-EngA-EngB-Septin-like GTPase superfamily. EngA (Der) GTPase family. As to quaternary structure, associates with the 50S ribosomal subunit.

In terms of biological role, GTPase that plays an essential role in the late steps of ribosome biogenesis. In Campylobacter jejuni subsp. jejuni serotype O:23/36 (strain 81-176), this protein is GTPase Der.